The following is a 118-amino-acid chain: Holo-[acyl-carrier-protein] synthase (118 aa).

Mg(2+)-binding residues include Asp8 and Glu58.

The protein belongs to the P-Pant transferase superfamily. AcpS family. Requires Mg(2+) as cofactor.

The protein resides in the cytoplasm. The catalysed reaction is apo-[ACP] + CoA = holo-[ACP] + adenosine 3',5'-bisphosphate + H(+). Functionally, transfers the 4'-phosphopantetheine moiety from coenzyme A to a Ser of acyl-carrier-protein. This chain is Holo-[acyl-carrier-protein] synthase, found in Streptococcus pyogenes serotype M12 (strain MGAS2096).